A 357-amino-acid polypeptide reads, in one-letter code: Acyl-CoA Delta12-desaturase (357 aa).

2 consecutive transmembrane segments (helical) span residues V49–S69 and I72–G92. The Fe cation site is built by H94, H99, H131, H134, and H135. Positions H94–H99 match the Histidine box-1 motif. A Histidine box-2 motif is present at residues H131 to H135. The next 2 helical transmembrane spans lie at L195–T215 and S223–W245. Fe cation is bound by residues H243, H272, H275, and H276. The Histidine box-3 signature appears at H272 to H276.

Belongs to the fatty acid desaturase type 1 family. Fe(2+) is required as a cofactor.

Its subcellular location is the membrane. The enzyme catalyses (9Z)-octadecenoyl-CoA + 2 Fe(II)-[cytochrome b5] + O2 + 2 H(+) = (9Z,12Z)-octadecadienoyl-CoA + 2 Fe(III)-[cytochrome b5] + 2 H2O. It catalyses the reaction (9Z)-hexadecenoyl-CoA + 2 Fe(II)-[cytochrome b5] + O2 + 2 H(+) = (9Z,12Z)-hexadecadienoyl-CoA + 2 Fe(III)-[cytochrome b5] + 2 H2O. It carries out the reaction hexadecanoyl-CoA + 2 Fe(II)-[cytochrome b5] + O2 + 2 H(+) = (9Z)-hexadecenoyl-CoA + 2 Fe(III)-[cytochrome b5] + 2 H2O. Functionally, catalyzes the formation of a Delta12 double bond, acting on monounsaturated fatty acyl substrates like palmitoleoyl-CoA ((9Z)-hexadecenoyl-CoA) and oleoyl-CoA ((9Z)-octadecenoyl-CoA) with higher desaturation activity on (9Z)-octadecenoyl-CoA than (9Z)-hexadecenoyl-CoA. Requires preexisting cis double bond at the Delta9 position of fatty acyls to be able to insert the Delta12 double bond. Delta12-desaturation of (9Z)-octadecenoyl-CoA in insects produces (9Z,12Z)-octadecadienoyl-CoA (linoleoyl-CoA) which may be used to supply precursors of crucial mediators of immunity and reproduction and other essential functions. Can also catalyze Delta9-desaturation on saturated fatty acyl substrates like palmitoyl-CoA (hexadecanoyl-CoA) but with lower efficiency. This Acheta domesticus (House cricket) protein is Acyl-CoA Delta12-desaturase.